A 426-amino-acid polypeptide reads, in one-letter code: S-adenosylmethionine synthase (426 aa).

Residue histidine 22 participates in ATP binding. Aspartate 24 is a binding site for Mg(2+). Residue glutamate 50 participates in K(+) binding. L-methionine is bound by residues glutamate 63 and glutamine 106. The tract at residues 106–116 (QSPDISQGVTA) is flexible loop. ATP-binding positions include 181-183 (DGK), 257-258 (KF), aspartate 266, 272-273 (RK), alanine 289, and lysine 293. Residue aspartate 266 participates in L-methionine binding. Lysine 297 is a binding site for L-methionine.

Belongs to the AdoMet synthase family. Homotetramer; dimer of dimers. Mg(2+) serves as cofactor. K(+) is required as a cofactor.

Its subcellular location is the cytoplasm. It carries out the reaction L-methionine + ATP + H2O = S-adenosyl-L-methionine + phosphate + diphosphate. It participates in amino-acid biosynthesis; S-adenosyl-L-methionine biosynthesis; S-adenosyl-L-methionine from L-methionine: step 1/1. Functionally, catalyzes the formation of S-adenosylmethionine (AdoMet) from methionine and ATP. The overall synthetic reaction is composed of two sequential steps, AdoMet formation and the subsequent tripolyphosphate hydrolysis which occurs prior to release of AdoMet from the enzyme. The protein is S-adenosylmethionine synthase of Synechocystis sp. (strain ATCC 27184 / PCC 6803 / Kazusa).